The chain runs to 203 residues: Ras-related protein Rab-30 (203 aa).

GTP-binding residues include valine 20, glycine 21, lysine 22, threonine 23, cysteine 24, and threonine 41. Threonine 23 lines the Mg(2+) pocket. The segment at 36-44 is switch-I; it reads PGQGATIGV. The Mg(2+) site is built by threonine 41 and aspartate 64. GTP contacts are provided by glycine 67, asparagine 122, lysine 123, aspartate 125, alanine 153, and lysine 154. The segment at 67 to 83 is switch-II; the sequence is GQERFRSITQSYYRSAN. Residues cysteine 199 and cysteine 200 are each lipidated (S-geranylgeranyl cysteine). Cysteine 200 is subject to Cysteine methyl ester. The propeptide at 201–203 is removed in mature form; it reads NFN.

Belongs to the small GTPase superfamily. Rab family. Mg(2+) is required as a cofactor.

The protein localises to the membrane. Its subcellular location is the golgi apparatus. The protein resides in the trans-Golgi network membrane. It is found in the cis-Golgi network membrane. It localises to the golgi apparatus membrane. The protein localises to the cytoplasm. Its subcellular location is the cytoplasmic vesicle. The protein resides in the autophagosome membrane. It is found in the autolysosome membrane. It catalyses the reaction GTP + H2O = GDP + phosphate + H(+). Its activity is regulated as follows. Regulated by guanine nucleotide exchange factors (GEFs) which promote the exchange of bound GDP for free GTP. Regulated by GTPase activating proteins (GAPs) which increase the GTP hydrolysis activity. Inhibited by GDP dissociation inhibitors (GDIs). Its function is as follows. The small GTPases Rab are key regulators of intracellular membrane trafficking, from the formation of transport vesicles to their fusion with membranes. Rabs cycle between an inactive GDP-bound form and an active GTP-bound form that is able to recruit to membranes different sets of downstream effectors directly responsible for vesicle formation, movement, tethering and fusion. RAB30 is required for maintaining the structural integrity of the Golgi apparatus, possibly by mediating interactions with cytoplasmic scaffolding proteins. Facilitates lipid homeostasis during fasting by regulating hepatic protein and lipid trafficking in a PPAR-alpha-dependent manner. Promotes autophagosome biogenesis during bacterial infection such as group A Streptococcus infection. This is Ras-related protein Rab-30 (RAB30) from Bos taurus (Bovine).